The primary structure comprises 461 residues: UDP-glycosyltransferase 88B1 (461 aa).

UDP-alpha-D-glucose-binding positions include Ser-278, 340-341 (WA), 358-366 (HCGWNSSLE), and 380-383 (YAEQ).

Belongs to the UDP-glycosyltransferase family.

In terms of biological role, may glycosylate diterpenes or flavonols in leaves. This chain is UDP-glycosyltransferase 88B1, found in Stevia rebaudiana (Stevia).